Consider the following 117-residue polypeptide: Large ribosomal subunit protein bL19 (117 aa).

This sequence belongs to the bacterial ribosomal protein bL19 family.

In terms of biological role, this protein is located at the 30S-50S ribosomal subunit interface and may play a role in the structure and function of the aminoacyl-tRNA binding site. This chain is Large ribosomal subunit protein bL19, found in Phocaeicola vulgatus (strain ATCC 8482 / DSM 1447 / JCM 5826 / CCUG 4940 / NBRC 14291 / NCTC 11154) (Bacteroides vulgatus).